We begin with the raw amino-acid sequence, 181 residues long: ATP synthase subunit delta (181 aa).

This sequence belongs to the ATPase delta chain family. In terms of assembly, F-type ATPases have 2 components, F(1) - the catalytic core - and F(0) - the membrane proton channel. F(1) has five subunits: alpha(3), beta(3), gamma(1), delta(1), epsilon(1). F(0) has three main subunits: a(1), b(2) and c(10-14). The alpha and beta chains form an alternating ring which encloses part of the gamma chain. F(1) is attached to F(0) by a central stalk formed by the gamma and epsilon chains, while a peripheral stalk is formed by the delta and b chains.

The protein localises to the cell inner membrane. In terms of biological role, f(1)F(0) ATP synthase produces ATP from ADP in the presence of a proton or sodium gradient. F-type ATPases consist of two structural domains, F(1) containing the extramembraneous catalytic core and F(0) containing the membrane proton channel, linked together by a central stalk and a peripheral stalk. During catalysis, ATP synthesis in the catalytic domain of F(1) is coupled via a rotary mechanism of the central stalk subunits to proton translocation. Its function is as follows. This protein is part of the stalk that links CF(0) to CF(1). It either transmits conformational changes from CF(0) to CF(1) or is implicated in proton conduction. The protein is ATP synthase subunit delta of Cupriavidus taiwanensis (strain DSM 17343 / BCRC 17206 / CCUG 44338 / CIP 107171 / LMG 19424 / R1) (Ralstonia taiwanensis (strain LMG 19424)).